A 208-amino-acid polypeptide reads, in one-letter code: Urease accessory protein UreE (208 aa).

The interval 145 to 165 is disordered; it reads EGGAYSAGGHGHTHAPAATPV.

Belongs to the UreE family.

Its subcellular location is the cytoplasm. Its function is as follows. Involved in urease metallocenter assembly. Binds nickel. Probably functions as a nickel donor during metallocenter assembly. The chain is Urease accessory protein UreE from Polaromonas naphthalenivorans (strain CJ2).